Here is a 364-residue protein sequence, read N- to C-terminus: MKKAILMMTFGSPEEITFEGVADFFTNIRRGVRPQDHEIQTLYDNYVRIGGTPLQKITRQEVTLVEARLGNEYSVYFANKFSSPFIPDVIGQMEADGIEQCICLILEPHYSFYSVMGYEKFLESKQIQFLVIKDWYQEEALLNYWADEIAKILKEEVKQDSFKVIFSAHSVPIFALDFGDPYIDQIFENSKLVAEKLGLSSEQYTNTWQSESDIGIPWIKPDVLEYLREQTEHPDHYIFVPISFISEHIEVLFDNDVECYDLCQEFGVNYHRPPMPNTDSRLIDALVNTVRVNENQEFKEFLPEEETFDELVPSDETKNILAESEDLQMPEFVKKLIEKKGRENVKMPYLIKKMLEKAGKLPKE.

The Fe-coproporphyrin III site is built by R29 and Y118. Residues H169 and E250 each coordinate Fe(2+).

The protein belongs to the ferrochelatase family.

Its subcellular location is the cytoplasm. The catalysed reaction is Fe-coproporphyrin III + 2 H(+) = coproporphyrin III + Fe(2+). It participates in porphyrin-containing compound metabolism; protoheme biosynthesis. Involved in coproporphyrin-dependent heme b biosynthesis. Catalyzes the insertion of ferrous iron into coproporphyrin III to form Fe-coproporphyrin III. This Streptococcus pneumoniae serotype 2 (strain D39 / NCTC 7466) protein is Coproporphyrin III ferrochelatase.